We begin with the raw amino-acid sequence, 651 residues long: LEAF RUST 10 DISEASE-RESISTANCE LOCUS RECEPTOR-LIKE PROTEIN KINASE-like 1.2 (651 aa).

The N-terminal stretch at 1 to 26 (MNPSTPSLLYTSIFFYFTIIATQTLS) is a signal peptide. Topologically, residues 27–264 (LDPKFKACEP…NDKRRRVIVK (238 aa)) are extracellular. N-linked (GlcNAc...) asparagine glycans are attached at residues Asn88, Asn114, Asn130, Asn136, Asn155, Asn193, and Asn213. A helical transmembrane segment spans residues 265 to 285 (VLIGASAAVVGLIAASIFWYV). The Cytoplasmic segment spans residues 286-651 (YHRRKTKSYR…DSVIVKWDSK (366 aa)). The Protein kinase domain occupies 341–613 (FDPSKELGDG…PCMSHVQDTL (273 aa)). Residues 347-355 (LGDGGFGTV) and Lys369 each bind ATP. Phosphotyrosine is present on Tyr415. The Proton acceptor role is filled by Asp465. Phosphoserine is present on Ser498. A phosphothreonine mark is found at Thr499 and Thr504. A Phosphotyrosine modification is found at Tyr512.

Belongs to the protein kinase superfamily. Ser/Thr protein kinase family.

Its subcellular location is the cell membrane. It is found in the membrane. The catalysed reaction is L-seryl-[protein] + ATP = O-phospho-L-seryl-[protein] + ADP + H(+). It catalyses the reaction L-threonyl-[protein] + ATP = O-phospho-L-threonyl-[protein] + ADP + H(+). Its function is as follows. Probable receptor-like serine/threonine-protein kinase involved in abscisic acid (ABA) signaling. Acts as a positive regulator of abiotic stress response. In Arabidopsis thaliana (Mouse-ear cress), this protein is LEAF RUST 10 DISEASE-RESISTANCE LOCUS RECEPTOR-LIKE PROTEIN KINASE-like 1.2.